Here is a 1074-residue protein sequence, read N- to C-terminus: Fibrous sheath CABYR-binding protein (1074 aa).

Residues 1-73 are disordered; that stretch reads MEECEEPEEP…SKDNYSRKEY (73 aa). Phosphoserine occurs at positions 25, 57, 186, and 275. 2 disordered regions span residues 272 to 294 and 317 to 343; these read QAPS…KDVV and LVQG…SELP. A compositionally biased stretch (low complexity) spans 274–290; the sequence is PSPAEETSAAETATTTA. S365 bears the Phosphoserine mark. Disordered stretches follow at residues 437 to 789 and 818 to 982; these read VSAD…PLES and GVPA…PLKT. The segment covering 448–467 has biased composition (low complexity); sequence PPSAEDASEEVASSEVLPPS. Residues 528–544 are compositionally biased toward pro residues; sequence VLPPPAEEAPAEVPPPL. The span at 558–575 shows a compositional bias: low complexity; that stretch reads EEGPAEVPLAPAEEVPAE. Pro residues-rich tracts occupy residues 576–592 and 673–688; these read FLPP…PPPL and PLPP…PPPA. The segment covering 689 to 720 has biased composition (low complexity); sequence TEEAPVEVLPPATEEAPVEVLPPATEEAPVEV. Position 1020 is a phosphoserine (S1020). Residues 1026–1054 are disordered; it reads SEKELESTTLTSDKMSEGIDSVPEDVSGT.

As to quaternary structure, interacts with CABYR. Interacts with ROPN1 and ROPN1L; the interaction increases upon spermatozoa capacitation conditions. Post-translationally, phosphorylated by PKA upon spermatozoa capacitation conditions. As to expression, expression is restricted to testis and epididymis, expressed by spermatozoa.

The protein localises to the cell projection. The protein resides in the cilium. Its subcellular location is the flagellum. Functionally, may be involved in the later stages of fibrous sheath biogenesis and spermatozoa capacitation. Inhibits ROPN1 and ROPN1L SUMOylation. Binds calcium. The protein is Fibrous sheath CABYR-binding protein of Mus musculus (Mouse).